We begin with the raw amino-acid sequence, 274 residues long: Shikimate dehydrogenase (NADP(+)) (274 aa).

Residues 14–16 and T61 contribute to the shikimate site; that span reads SKS. The active-site Proton acceptor is the K65. Position 77 (E77) interacts with NADP(+). 2 residues coordinate shikimate: N86 and D102. NADP(+)-binding positions include 126 to 130, 149 to 154, and M212; these read GAGGA and NRTLEK. Y214 contributes to the shikimate binding site. An NADP(+)-binding site is contributed by G237.

The protein belongs to the shikimate dehydrogenase family. As to quaternary structure, homodimer.

The enzyme catalyses shikimate + NADP(+) = 3-dehydroshikimate + NADPH + H(+). It participates in metabolic intermediate biosynthesis; chorismate biosynthesis; chorismate from D-erythrose 4-phosphate and phosphoenolpyruvate: step 4/7. Its function is as follows. Involved in the biosynthesis of the chorismate, which leads to the biosynthesis of aromatic amino acids. Catalyzes the reversible NADPH linked reduction of 3-dehydroshikimate (DHSA) to yield shikimate (SA). This chain is Shikimate dehydrogenase (NADP(+)), found in Actinobacillus pleuropneumoniae serotype 5b (strain L20).